An 815-amino-acid chain; its full sequence is Minichromosome loss protein 1 (815 aa).

WD repeat units lie at residues 11-50 (AHTDGLTRLAYTRDGKFLLTVGSNQVIRKFQVGSDEEPDS), 53-90 (NHQDPITGIAVAENYFCTCSEDATVCVYPIDSPTEHTL), 93-132 (RTTLPIRDVAYSVDGNWIAIASDETAVKVVSSTDSSQIFS), 135-174 (PAKASNKHVTYSPNGNFLAVSSCNGILYFYDTQTRELIKF), and 228-267 (ENHSGVTDISWSSNGMYIAASFKKGGILIWDTQSHEVVVE). Residues 306–362 (LKEENDPTKPLTSSKSKNRTSKELDDLFGSDDEQSQNVNDLDGNSANEENEFINHDG) form a disordered region. Polar residues predominate over residues 340–352 (SQNVNDLDGNSAN). Residues 517–553 (ENESPVTISLSSSVVLVCTSAGYVRVFSRQGFPISIH) form a WD 6 repeat.

Interacts with pof3 and pol1.

The protein localises to the nucleus. It localises to the chromosome. In terms of biological role, has a role in regulating DNA replication complexes. Acts as a regulator of post DNA replication initiation. Associates with chromatin during G1 and S phases of mitosis. Required for the transcriptional repression of the outer repeats of the centromeric region. Acts as a polymerase alpha replication accessory factor and is important for S-phase DNA damage survival. Plays a role in lagging-strand synthesis and Ozaki fragment processing, in addition to DNA repair. The chain is Minichromosome loss protein 1 (mcl1) from Schizosaccharomyces pombe (strain 972 / ATCC 24843) (Fission yeast).